The following is a 126-amino-acid chain: Fluoride-specific ion channel FluC (126 aa).

The next 4 membrane-spanning stretches (helical) occupy residues 3 to 23 (LSIL…WFLG), 35 to 55 (LGTL…VAYF), 68 to 88 (FIIT…AEVV), and 103 to 123 (IAIH…TVAV). Gly75 and Ser78 together coordinate Na(+).

It belongs to the fluoride channel Fluc/FEX (TC 1.A.43) family.

Its subcellular location is the cell inner membrane. It catalyses the reaction fluoride(in) = fluoride(out). Na(+) is not transported, but it plays an essential structural role and its presence is essential for fluoride channel function. Fluoride-specific ion channel. Important for reducing fluoride concentration in the cell, thus reducing its toxicity. The protein is Fluoride-specific ion channel FluC of Paraburkholderia phymatum (strain DSM 17167 / CIP 108236 / LMG 21445 / STM815) (Burkholderia phymatum).